The sequence spans 324 residues: Probable pectinesterase A (324 aa).

A signal peptide spans 1 to 19 (MHLPSLVLGLLGLGLTASA). N27 carries N-linked (GlcNAc...) asparagine glycosylation. Q142 provides a ligand contact to substrate. D165 functions as the Proton donor in the catalytic mechanism. D186 functions as the Nucleophile in the catalytic mechanism. N-linked (GlcNAc...) asparagine glycosylation is present at N191. Substrate-binding residues include R246 and W248.

The protein belongs to the pectinesterase family.

It is found in the secreted. The catalysed reaction is [(1-&gt;4)-alpha-D-galacturonosyl methyl ester](n) + n H2O = [(1-&gt;4)-alpha-D-galacturonosyl](n) + n methanol + n H(+). It functions in the pathway glycan metabolism; pectin degradation; 2-dehydro-3-deoxy-D-gluconate from pectin: step 1/5. Involved in maceration and soft-rotting of plant tissue. The polypeptide is Probable pectinesterase A (pmeA) (Neosartorya fischeri (strain ATCC 1020 / DSM 3700 / CBS 544.65 / FGSC A1164 / JCM 1740 / NRRL 181 / WB 181) (Aspergillus fischerianus)).